The primary structure comprises 309 residues: High-affinity zinc uptake system protein AztC (309 aa).

A signal peptide spans 1-24 (MKDWLFRIATCSIMTFSSLAAAQA). Position 61 (H61) interacts with Zn(2+). The segment at 117 to 132 (GGGHYHYIDGKAVFHA) is D-loop. A Zn(2+)-binding site is contributed by H138. A disulfide bond links C158 and C165. Position 204 (H204) interacts with Zn(2+). Residues 222 to 229 (QGVSTESE) are Z-loop. Residue D279 coordinates Zn(2+).

The protein belongs to the bacterial solute-binding protein 9 family. Monomer.

The protein localises to the periplasm. Functionally, part of the ATP-binding cassette (ABC) transport system AztABCD involved in zinc import. Binds zinc with high affinity and specificity and delivers it to the membrane permease for translocation into the cytoplasm. This is High-affinity zinc uptake system protein AztC from Paracoccus denitrificans (strain Pd 1222).